The sequence spans 296 residues: MRVRTFCFSLVCALGASTYLLWRGWLQLSLPAGSYGVMRSRSGGYHHALIAPGRFLWRWEPLLPSNAELFAFELKKQTVSVTVQDVLPAAKEYAQLLDQHAPFDWTLALSARVALKEAFLLDTVQRERITDQNSLERYVDTTAQAALTQVSHDFIARCMADPALYERVHTQYGLATRELKRAIEKEIPHCAISEVVLSEVHIPDMVLYHTAEQAYRAFEAKRSEHLSALAQQAAKRSALENFEMQRLTKWGEFFQRYPSVIDFLNAIRQDGASTLETLKKGSTASHRAIPHEETTR.

A helical membrane pass occupies residues 7 to 26 (CFSLVCALGASTYLLWRGWL).

It is found in the membrane. This is an uncharacterized protein from Treponema pallidum (strain Nichols).